Consider the following 342-residue polypeptide: Tetraacyldisaccharide 4'-kinase (342 aa).

68 to 75 (TVGGTGKT) is an ATP binding site.

This sequence belongs to the LpxK family.

It catalyses the reaction a lipid A disaccharide + ATP = a lipid IVA + ADP + H(+). Its pathway is glycolipid biosynthesis; lipid IV(A) biosynthesis; lipid IV(A) from (3R)-3-hydroxytetradecanoyl-[acyl-carrier-protein] and UDP-N-acetyl-alpha-D-glucosamine: step 6/6. In terms of biological role, transfers the gamma-phosphate of ATP to the 4'-position of a tetraacyldisaccharide 1-phosphate intermediate (termed DS-1-P) to form tetraacyldisaccharide 1,4'-bis-phosphate (lipid IVA). This Burkholderia vietnamiensis (strain G4 / LMG 22486) (Burkholderia cepacia (strain R1808)) protein is Tetraacyldisaccharide 4'-kinase.